The sequence spans 315 residues: Ribosomal RNA small subunit methyltransferase H (315 aa).

S-adenosyl-L-methionine-binding positions include glycine 37–histidine 39, aspartate 57, aspartate 105, and glutamine 112.

The protein belongs to the methyltransferase superfamily. RsmH family.

The protein resides in the cytoplasm. It carries out the reaction cytidine(1402) in 16S rRNA + S-adenosyl-L-methionine = N(4)-methylcytidine(1402) in 16S rRNA + S-adenosyl-L-homocysteine + H(+). In terms of biological role, specifically methylates the N4 position of cytidine in position 1402 (C1402) of 16S rRNA. The polypeptide is Ribosomal RNA small subunit methyltransferase H (Nitrosococcus oceani (strain ATCC 19707 / BCRC 17464 / JCM 30415 / NCIMB 11848 / C-107)).